The chain runs to 292 residues: Small ribosomal subunit biogenesis GTPase RsgA (292 aa).

A CP-type G domain is found at 64–221 (RSELFRPAVA…LVDTPGFSSL (158 aa)). GTP contacts are provided by residues 113 to 116 (NKMD) and 164 to 172 (GPSGVGKST). Residues C245, C250, H252, and C258 each coordinate Zn(2+).

This sequence belongs to the TRAFAC class YlqF/YawG GTPase family. RsgA subfamily. As to quaternary structure, monomer. Associates with 30S ribosomal subunit, binds 16S rRNA. It depends on Zn(2+) as a cofactor.

It localises to the cytoplasm. Its function is as follows. One of several proteins that assist in the late maturation steps of the functional core of the 30S ribosomal subunit. Helps release RbfA from mature subunits. May play a role in the assembly of ribosomal proteins into the subunit. Circularly permuted GTPase that catalyzes slow GTP hydrolysis, GTPase activity is stimulated by the 30S ribosomal subunit. In Clostridium botulinum (strain ATCC 19397 / Type A), this protein is Small ribosomal subunit biogenesis GTPase RsgA.